The following is a 65-amino-acid chain: Putative cytochrome c oxidase subunit 5C-4 (65 aa).

The chain crosses the membrane as a helical span at residues 20 to 37 (EIIYGITLGFAVGGLWKM).

The protein belongs to the cytochrome c oxidase subunit 5C family.

The protein resides in the mitochondrion inner membrane. Functionally, this protein is one of the nuclear-coded polypeptide chains of cytochrome c oxidase, the terminal oxidase in mitochondrial electron transport. The protein is Putative cytochrome c oxidase subunit 5C-4 of Arabidopsis thaliana (Mouse-ear cress).